The following is a 142-amino-acid chain: uncharacterized protein (142 aa).

A signal peptide spans 1-20 (MPSVNEFFIFFLIVWHTCEC). A glycan (N-linked (GlcNAc...) asparagine) is linked at asparagine 80.

This is an uncharacterized protein from Dictyostelium discoideum (Social amoeba).